The chain runs to 541 residues: Putative ammonium transporter sll0537 (541 aa).

The next 11 membrane-spanning stretches (helical) occupy residues 6-26 (TLWLLLCAGLVFFMQAGFMCL), 44-64 (FADFGISVALFWSFGFSIMFG), 86-106 (LAVFFLFQAMFCGTATTIISG), 117-137 (YLLVAGLASGLIYPLFGDWAW), 161-181 (FAGSTVVHSVGAWIGLATILV), 203-223 (MPFSVLGTLILWFGWLGFNGG), 235-255 (IMVNTVLAGVGGMLMAGLISL), 260-280 (MIQVEPLMNGSLAGLVAITAS), 283-303 (VVMTPIAMVIGATGSAIAYLV), 316-336 (VDAVAVHGGAGVWGTLCVGLF), and 356-376 (LLGIGVCTLWAFGLAWVFLTL).

It belongs to the ammonia transporter channel (TC 1.A.11.2) family.

It localises to the cell membrane. The polypeptide is Putative ammonium transporter sll0537 (Synechocystis sp. (strain ATCC 27184 / PCC 6803 / Kazusa)).